We begin with the raw amino-acid sequence, 344 residues long: Plastoglobule-localized metallopeptidase 48, chloroplastic (344 aa).

The transit peptide at 1 to 47 directs the protein to the chloroplast; the sequence is MAVSVSAPVLSLCYNQSGELSRSLGYRLPKKVGFSSGRRSVSYIGFG. Transmembrane regions (helical) follow at residues 102 to 122 and 169 to 189; these read LLGS…SVLV and FIVV…QAVL. Position 191 (histidine 191) interacts with Zn(2+). Glutamate 192 is an active-site residue. Histidine 195 contributes to the Zn(2+) binding site. The chain crosses the membrane as a helical span at residues 201-221; it reads GVWLTFANILTLGAYTVPAFG. Glutamate 240 provides a ligand contact to Zn(2+). Residues 256–272 form a helical membrane-spanning segment; that stretch reads VVVSVLMKLAGGCPSIA.

This sequence belongs to the peptidase M48 family. M48D subfamily. Interacts with plastoglobule (PG) core proteins ABC1K3, PES1 and CCD4. It depends on Zn(2+) as a cofactor. As to expression, mostly expressed in flowers (e.g. sepals, petals and stamen), seeds, leaves and cotyledons.

Its subcellular location is the plastid. It is found in the chloroplast. The protein resides in the plastoglobule. The protein localises to the chloroplast membrane. Metalloendopeptidase with a Zn-dependent proteolytic activity and substrate cleavage upstream of hydrophobic residues. Positive regulator of senescence, probably by degrading CCD4, thus participating in the controlled removal of carotenoids from the thylakoid membrane during the senescence process. The polypeptide is Plastoglobule-localized metallopeptidase 48, chloroplastic (Arabidopsis thaliana (Mouse-ear cress)).